The following is a 325-amino-acid chain: MSKAKITAIGTYAPSRRLTNADLEKIVDTSDEWIVQRTGMRERRIADEHQFTSDLCIEAVKNLKSRYKGTLDDVDMILVATTTSDYAFPSTACRVQEYFGWESTGALDINATCAGLTYGLHLANGLITSGLHQKILVIAGETLSKVTDYTDRTTCVLFGDAAGALLVERDEETPGFLASVQGTSGNGGDILYRAGLRNEINGVQLVGSGKMVQNGREVYKWAARTVPGEFERLLHKAGLSSDDLDWFVPHSANLRMIESICEKTPFPIEKTLTSVEHYGNTSSVSIVLALDLAVKAGKLKKDQIVLLFGFGGGLTYTGLLIKWGM.

Residues C113 and H250 contribute to the active site. Residues 251–255 (SANLR) are ACP-binding. N280 is a catalytic residue.

Belongs to the thiolase-like superfamily. FabH family. As to quaternary structure, homodimer.

The protein resides in the cytoplasm. The catalysed reaction is 3-methylbutanoyl-CoA + malonyl-[ACP] + H(+) = 5-methyl-3-oxohexanoyl-[ACP] + CO2 + CoA. The enzyme catalyses 2-methylpropanoyl-CoA + malonyl-[ACP] + H(+) = 4-methyl-3-oxopentanoyl-[ACP] + CO2 + CoA. It carries out the reaction (2S)-2-methylbutanoyl-CoA + malonyl-[ACP] + H(+) = (4S)-4-methyl-3-oxohexanoyl-[ACP] + CO2 + CoA. It catalyses the reaction malonyl-[ACP] + acetyl-CoA + H(+) = 3-oxobutanoyl-[ACP] + CO2 + CoA. The catalysed reaction is malonyl-[ACP] + propanoyl-CoA + H(+) = 3-oxopentanoyl-[ACP] + CO2 + CoA. The enzyme catalyses butanoyl-CoA + malonyl-[ACP] + H(+) = 3-oxohexanoyl-[ACP] + CO2 + CoA. It carries out the reaction pentanoyl-CoA + malonyl-[ACP] + H(+) = 3-oxoheptanoyl-[ACP] + CO2 + CoA. It catalyses the reaction hexanoyl-CoA + malonyl-[ACP] + H(+) = 3-oxooctanoyl-[ACP] + CO2 + CoA. The catalysed reaction is heptanoyl-CoA + malonyl-[ACP] + H(+) = 3-oxononanoyl-[ACP] + CO2 + CoA. It participates in lipid metabolism; fatty acid biosynthesis. In terms of biological role, catalyzes the condensation reaction of fatty acid synthesis by the addition to an acyl acceptor of two carbons from malonyl-ACP. Catalyzes the first condensation reaction which initiates fatty acid synthesis and may therefore play a role in governing the total rate of fatty acid production. Possesses both acetoacetyl-ACP synthase and acetyl transacylase activities. Has some substrate specificity for branched chain acyl-CoA, determining the biosynthesis of branched-chain of fatty acids instead of straight-chain. In Bacillus subtilis (strain 168), this protein is Beta-ketoacyl-[acyl-carrier-protein] synthase III 2.